The primary structure comprises 215 residues: MQPEQLAGCAVVLTVTVLTLRWMFRVDKGGEVSESRTSSSGVDNEPPVNSEHVHLVKTVFPHLESSAIAYDLQKTKNVDATIENALRGQPLPLPPRNSSLYARFPLSAGAGASSHSEETTPSHEVTSNVSSGSSASSLASNEHRSLIETYNLSSRISSSDNSSSSTGNEEVRNRSKLPSSKKEREELFRKRKEEMILAARKRMEGKIKGEKQDKN.

The N-terminal 29 residues, 1–29 (MQPEQLAGCAVVLTVTVLTLRWMFRVDKG), are a transit peptide targeting the mitochondrion. Residues 48–90 (VNSEHVHLVKTVFPHLESSAIAYDLQKTKNVDATIENALRGQP) enclose the CUE domain. Positions 109 to 191 (GAGASSHSEE…KEREELFRKR (83 aa)) are disordered. Low complexity-rich tracts occupy residues 122–140 (SHEV…SLAS) and 153–165 (SSRI…SSSS). Over residues 180–191 (SKKEREELFRKR) the composition is skewed to basic and acidic residues.

It localises to the mitochondrion. The sequence is that of CUE domain-containing protein 4, mitochondrial from Schizosaccharomyces pombe (strain 972 / ATCC 24843) (Fission yeast).